We begin with the raw amino-acid sequence, 273 residues long: Light-independent protochlorophyllide reductase iron-sulfur ATP-binding protein (273 aa).

ATP-binding positions include 12–17 (GIGKST) and Lys41. Mg(2+) is bound at residue Ser16. Positions 97 and 131 each coordinate [4Fe-4S] cluster. 182–183 (NR) is an ATP binding site.

This sequence belongs to the NifH/BchL/ChlL family. In terms of assembly, homodimer. Protochlorophyllide reductase is composed of three subunits; BchL, BchN and BchB. Requires [4Fe-4S] cluster as cofactor.

It carries out the reaction chlorophyllide a + oxidized 2[4Fe-4S]-[ferredoxin] + 2 ADP + 2 phosphate = protochlorophyllide a + reduced 2[4Fe-4S]-[ferredoxin] + 2 ATP + 2 H2O. It participates in porphyrin-containing compound metabolism; bacteriochlorophyll biosynthesis (light-independent). Component of the dark-operative protochlorophyllide reductase (DPOR) that uses Mg-ATP and reduced ferredoxin to reduce ring D of protochlorophyllide (Pchlide) to form chlorophyllide a (Chlide). This reaction is light-independent. The L component serves as a unique electron donor to the NB-component of the complex, and binds Mg-ATP. The sequence is that of Light-independent protochlorophyllide reductase iron-sulfur ATP-binding protein from Chloroflexus aggregans (strain MD-66 / DSM 9485).